The primary structure comprises 387 residues: Phosphoglycerate kinase (387 aa).

Residues 21–23 (DLN), Arg36, 59–62 (HLGR), Arg113, and Arg146 each bind substrate. Residues Lys197, Glu314, and 340–343 (GGDT) contribute to the ATP site.

Belongs to the phosphoglycerate kinase family. Monomer.

It localises to the cytoplasm. It carries out the reaction (2R)-3-phosphoglycerate + ATP = (2R)-3-phospho-glyceroyl phosphate + ADP. It participates in carbohydrate degradation; glycolysis; pyruvate from D-glyceraldehyde 3-phosphate: step 2/5. The polypeptide is Phosphoglycerate kinase (pgk) (Pasteurella multocida (strain Pm70)).